The primary structure comprises 327 residues: Arabinose 5-phosphate isomerase KpsF (327 aa).

The SIS domain maps to Val-48–Phe-191. Gly-63–Gly-68 serves as a coordination point for ATP. Residues Gly-82–Thr-83, His-89, His-95, Lys-121–Gly-130, and His-155–Ala-157 contribute to the substrate site. Residue His-89 coordinates Zn(2+). 2 consecutive CBS domains span residues Met-217–Leu-273 and Met-282–Asp-327.

In terms of assembly, homotetramer.

It carries out the reaction D-arabinose 5-phosphate = D-ribulose 5-phosphate. Its activity is regulated as follows. Inhibited by 10 uM zinc, cadmium or mercury ions. Functionally, involved in the biosynthesis of K-antigen capsules. Catalyzes the reversible aldol-ketol isomerization between D-ribulose 5-phosphate (Ru5P) and D-arabinose 5-phosphate (A5P). This chain is Arabinose 5-phosphate isomerase KpsF, found in Escherichia coli O6:H1 (strain CFT073 / ATCC 700928 / UPEC).